Consider the following 773-residue polypeptide: Acyl-homoserine lactone acylase PvdQ (773 aa).

The signal sequence occupies residues Met-1–Ala-23. A propeptide spans Ser-200–Gly-221 (spacer peptide). Catalysis depends on Ser-222, which acts as the Nucleophile.

The protein belongs to the peptidase S45 family. As to quaternary structure, heterodimer of an alpha subunit and a beta subunit processed from the same precursor.

It localises to the periplasm. The enzyme catalyses an N-acyl-L-homoserine lactone + H2O = L-homoserine lactone + a carboxylate. Catalyzes the deacylation of acyl-homoserine lactone (AHL or acyl-HSL), releasing homoserine lactone (HSL) and the corresponding fatty acid. Possesses a specificity for the degradation of long-chain acyl-HSLs (side chains of 11 to 14 carbons in length). This is Acyl-homoserine lactone acylase PvdQ (pvdQ) from Pseudomonas syringae pv. tomato (strain ATCC BAA-871 / DC3000).